Reading from the N-terminus, the 267-residue chain is Strigolactone esterase D14 (267 aa).

The active-site Nucleophile is the serine 97. Active-site residues include aspartate 218 and histidine 247.

It belongs to the AB hydrolase superfamily. In terms of assembly, interacts with SMXL6, SMXL7 and SMXL8. The interaction with SMXLs occurs in the presence of (2'R) stereoisomers of strigolactones, but not (2'S) stereoisomers. Interacts with MAX2. Forms a complex with MAX2 and SKP1A/ASK1 in presence of strigolactone. Expressed at high levels in rosette and cauline leaves and at lower levels in axillary buds, inflorescences, stems, roots and developing vascular tissue of cotyledons.

The protein localises to the cytoplasm. Its subcellular location is the nucleus. Its function is as follows. Involved in strigolactone signaling pathway. Does not move long distances acropetally in the plant to regulate shoot branching and is rapidly degraded in the presence of strigolactones. Functions downstream of strigolactone synthesis, as a component of hormone signaling and as an enzyme that participates in the conversion of strigolactones to the bioactive form. Acts probably as a strigolactone receptor. Strigolactones are hormones that inhibit tillering and shoot branching through the MAX-dependent pathway, contribute to the regulation of shoot architectural response to phosphate-limiting conditions and function as rhizosphere signal that stimulates hyphal branching of arbuscular mycorrhizal fungi and trigger seed germination of root parasitic weeds. Hydrolyzes methyl carlactonoate (MeCLA), but not carlactone (CL) or carlactonoic acid (CLA). Hydrolyzes the butenolide ring of strigolactones. The initial nucleophilic attack causes an electron shift, followed by the addition of a water molecule, to lead to the release of the ABC ring product and the formation of a 'Ser-97'-stabilized open lactone intermediate. Has no esterase activity for 4-nitrophenyl butyrate. Binds and hydrolyzes the synthetic strigolactone analog GR24 in vitro. Forms a stable covalent complex with the D-ring of strigolactone, which is essential for hormone bioactivity. The D-ring is attached to His-247 of the catalytic triad. The hydrolysis of strigolactone into a covalently linked intermediate molecule initiates a conformational change of D14 to facilitate interaction with MAX2 and formation of the D14-MAX2-SKP1/ASK1 complex to trigger strigolactone signaling. This mechanism defines D14 as a non-canonical hormone receptor with dual functions to generate and sense the active form of strigolactone. In Arabidopsis thaliana (Mouse-ear cress), this protein is Strigolactone esterase D14.